A 628-amino-acid polypeptide reads, in one-letter code: Netrin-4 (628 aa).

A signal peptide spans 1 to 18; sequence MGSCARLLLLWGCTVVAA. Residues 30 to 261 enclose the Laminin N-terminal domain; sequence CEKACNPRMG…AIYDFIVKGS (232 aa). Residues asparagine 56 and asparagine 163 are each glycosylated (N-linked (GlcNAc...) asparagine). 12 cysteine pairs are disulfide-bonded: cysteine 262–cysteine 271, cysteine 264–cysteine 293, cysteine 295–cysteine 304, cysteine 307–cysteine 329, cysteine 332–cysteine 341, cysteine 334–cysteine 359, cysteine 362–cysteine 371, cysteine 374–cysteine 392, cysteine 395–cysteine 413, cysteine 397–cysteine 420, cysteine 422–cysteine 431, and cysteine 434–cysteine 446. 3 Laminin EGF-like domains span residues 262–331, 332–394, and 395–448; these read CFCN…ECRT, CKCN…ACKP, and CSCH…GCRP. Asparagine 353 is a glycosylation site (N-linked (GlcNAc...) asparagine). An N-linked (GlcNAc...) asparagine glycan is attached at asparagine 483. Cystine bridges form between cysteine 506-cysteine 576 and cysteine 520-cysteine 627. Positions 506–627 constitute an NTR domain; it reads CECKEQTLGN…KVMDILKREC (122 aa).

As to quaternary structure, may form a homodimer.

The protein resides in the secreted. The protein localises to the extracellular space. Its subcellular location is the extracellular matrix. Its function is as follows. May play an important role in neural, kidney and vascular development. In Pongo abelii (Sumatran orangutan), this protein is Netrin-4 (NTN4).